The primary structure comprises 275 residues: N-acetyltransferase YodP (275 aa).

The 147-residue stretch at 125–271 folds into the N-acetyltransferase domain; the sequence is FTMRKAETND…AEGLENMNIW (147 aa).

Belongs to the acetyltransferase family.

It catalyses the reaction (3S)-3,6-diaminohexanoate + acetyl-CoA = (3S)-6-acetamido-3-aminohexanoate + CoA + H(+). In terms of biological role, in vitro, is able to catalyze the acetylation of beta-lysine to N6-acetyl-beta-lysine, an archaeal osmolyte produced by methanogenic archaea. Its physiological function has not yet been elucidated. This chain is N-acetyltransferase YodP (yodP), found in Bacillus subtilis (strain 168).